A 173-amino-acid polypeptide reads, in one-letter code: MAEKRNIFLVGPMGAGKSTIGRQLAQQLNMEFYDSDQEIEKRTGADVGWVFDVEGEDGFRNREEKVINELTEKQGIVLATGGGSVKSRETRNRLSARGVVVYLETTIEKQLARTQRDKKRPLLQVEAPPREVLEALANERNPLYEEIADVTIRTDDQSAKVVANQIIHMLESN.

ATP is bound at residue glycine 14–threonine 19. Serine 18 serves as a coordination point for Mg(2+). Aspartate 36, arginine 60, and glycine 82 together coordinate substrate. Position 120 (arginine 120) interacts with ATP. Position 140 (arginine 140) interacts with substrate. Glutamine 157 lines the ATP pocket.

Belongs to the shikimate kinase family. As to quaternary structure, monomer. Requires Mg(2+) as cofactor.

Its subcellular location is the cytoplasm. The catalysed reaction is shikimate + ATP = 3-phosphoshikimate + ADP + H(+). It participates in metabolic intermediate biosynthesis; chorismate biosynthesis; chorismate from D-erythrose 4-phosphate and phosphoenolpyruvate: step 5/7. In terms of biological role, catalyzes the specific phosphorylation of the 3-hydroxyl group of shikimic acid using ATP as a cosubstrate. The polypeptide is Shikimate kinase 1 (Salmonella typhimurium (strain LT2 / SGSC1412 / ATCC 700720)).